Here is a 463-residue protein sequence, read N- to C-terminus: GTPase Der (463 aa).

EngA-type G domains are found at residues 3 to 166 (PVVA…PESG) and 177 to 350 (IRIA…QSAM). GTP contacts are provided by residues 9-16 (GRTNVGKS), 56-60 (DTGGI), 118-121 (NKID), 183-190 (GRPNVGKS), 230-234 (DTAGI), and 295-298 (NKWD). The 85-residue stretch at 351–435 (LDLSASRLTQ…PLKLVFKSAE (85 aa)) folds into the KH-like domain.

Belongs to the TRAFAC class TrmE-Era-EngA-EngB-Septin-like GTPase superfamily. EngA (Der) GTPase family. Associates with the 50S ribosomal subunit.

Functionally, GTPase that plays an essential role in the late steps of ribosome biogenesis. The sequence is that of GTPase Der from Methylococcus capsulatus (strain ATCC 33009 / NCIMB 11132 / Bath).